Here is a 122-residue protein sequence, read N- to C-terminus: UPF0102 protein XOO3839 (122 aa).

The protein belongs to the UPF0102 family.

This Xanthomonas oryzae pv. oryzae (strain KACC10331 / KXO85) protein is UPF0102 protein XOO3839.